The sequence spans 334 residues: Transcription factor MYB92 (334 aa).

HTH myb-type domains follow at residues 9–61 (DSGL…TNYL) and 62–116 (RPDI…KKKL). DNA-binding regions (H-T-H motif) lie at residues 37-61 (WRAL…TNYL) and 89-112 (WSTI…NTHL).

In terms of assembly, interacts with FBX5. In terms of tissue distribution, highly expressed in roots and at lower levels in stems, flowers and siliques.

Its subcellular location is the nucleus. Its function is as follows. Probable transcription factor. This Arabidopsis thaliana (Mouse-ear cress) protein is Transcription factor MYB92.